A 517-amino-acid polypeptide reads, in one-letter code: NAD(P)H-quinone oxidoreductase subunit 2 (517 aa).

14 consecutive transmembrane segments (helical) span residues 16–36 (ILPEGIVIITLVGVLVGDLIF), 43–63 (WLPYMAIIGLLASIVALYLAW), 80–100 (LSIVFRAIIALSTAVTILMSI), 110–130 (LAEFIAIMLTATLGGMFLCGA), 133–153 (LVMIFISLEMLSISSYLMTGY), 168–188 (LLIGASSSAIFLYGVSLLYGL), 211–231 (LGLAIALVFVIAGIAFKISAV), 245–265 (PTPVVAFLSVGSKAAGFALAI), 279–299 (WHFVFTALAILSMVLGNVVAL), 307–327 (MLAYSSIGQAGFVMIGLVAGT), 335–355 (VFYLLVYLFMNLGAFACIILF), 379–399 (LALSICLLSLGGIPPLAGFFG), 401–421 (IYLFWAGWQAELYGLVILGLV), and 467–487 (VGIVLTLIATSLAGILSNPLF).

Belongs to the complex I subunit 2 family. In terms of assembly, NDH-1 can be composed of about 15 different subunits; different subcomplexes with different compositions have been identified which probably have different functions.

The protein localises to the cellular thylakoid membrane. It carries out the reaction a plastoquinone + NADH + (n+1) H(+)(in) = a plastoquinol + NAD(+) + n H(+)(out). It catalyses the reaction a plastoquinone + NADPH + (n+1) H(+)(in) = a plastoquinol + NADP(+) + n H(+)(out). In terms of biological role, NDH-1 shuttles electrons from an unknown electron donor, via FMN and iron-sulfur (Fe-S) centers, to quinones in the respiratory and/or the photosynthetic chain. The immediate electron acceptor for the enzyme in this species is believed to be plastoquinone. Couples the redox reaction to proton translocation, and thus conserves the redox energy in a proton gradient. Cyanobacterial NDH-1 also plays a role in inorganic carbon-concentration. The sequence is that of NAD(P)H-quinone oxidoreductase subunit 2 from Rippkaea orientalis (strain PCC 8801 / RF-1) (Cyanothece sp. (strain PCC 8801)).